Here is a 459-residue protein sequence, read N- to C-terminus: MAARHHAFILAGTGSGCGKTTVTLGLLRLLQKRALRVQPFKVGPDYLDTGWHTAICGVASRNLDSFMLPPPVLNALFCEQMRQADIAVIEGVMGLYDGYGVDPNYCSTAAMAKQLGCPVILLVDGKAVSTSLAATVMGFQHFDPTLNLAGVIVNRVTSDAHYQLLKNAIEHYCSLPVLGYVPPCDGVALPERHLGLITARESLVNQQSWHDFAATLEQTVDVDALLSLSVLSALPAGMWPERPDNTAGAGLTLALADDEAFNFYYPDNIDLLERAGVNIVRFSPLHDRALPDCQMIWLGGGYPELYAADLAANTVMLKHLRAAHQRGVAIYAECGGLMYLGSTLEDSGGEIHQMANIIPGHSKMGKRLTRFGYCEAQAMQPTLLAAPGEIVRGHEFHYSDFIPETPAVMACRKVRDGRVLQEWTGGWQTGNTFASYLHVHFAQRPEMLQHWLAAARRVL.

Residues threonine 252–glutamate 446 form the GATase cobBQ-type domain. Cysteine 334 functions as the Nucleophile in the catalytic mechanism.

Belongs to the CobB/CbiA family. As to quaternary structure, monomer. The cofactor is Mg(2+).

The catalysed reaction is cob(II)yrinate + 2 L-glutamine + 2 ATP + 2 H2O = cob(II)yrinate a,c diamide + 2 L-glutamate + 2 ADP + 2 phosphate + 2 H(+). It participates in cofactor biosynthesis; adenosylcobalamin biosynthesis; cob(II)yrinate a,c-diamide from sirohydrochlorin (anaerobic route): step 10/10. In terms of biological role, catalyzes the ATP-dependent amidation of the two carboxylate groups at positions a and c of cobyrinate, using either L-glutamine or ammonia as the nitrogen source. Is able to use other nucleotide triphosphates as substrate, such as GTP or UTP, although less efficiently than ATP. The chain is Cobyrinate a,c-diamide synthase from Salmonella typhimurium (strain LT2 / SGSC1412 / ATCC 700720).